A 209-amino-acid chain; its full sequence is Large ribosomal subunit protein uL3 (209 aa).

A disordered region spans residues 118-150 (GFQGAIKRHGQSRGPMTHGSRYHRRPGSMGPVD).

It belongs to the universal ribosomal protein uL3 family. In terms of assembly, part of the 50S ribosomal subunit. Forms a cluster with proteins L14 and L19.

Its function is as follows. One of the primary rRNA binding proteins, it binds directly near the 3'-end of the 23S rRNA, where it nucleates assembly of the 50S subunit. The polypeptide is Large ribosomal subunit protein uL3 (Bacillus pumilus (strain SAFR-032)).